The following is a 192-amino-acid chain: Thymidine kinase (192 aa).

ATP-binding positions include 9 to 16 (SAMNAGKS) and 87 to 90 (DECQ). Residue Glu-88 is the Proton acceptor of the active site. The Zn(2+) site is built by Cys-145, Cys-147, Cys-182, and His-185.

It belongs to the thymidine kinase family. Homotetramer.

The protein resides in the cytoplasm. The catalysed reaction is thymidine + ATP = dTMP + ADP + H(+). In Vibrio parahaemolyticus serotype O3:K6 (strain RIMD 2210633), this protein is Thymidine kinase.